A 156-amino-acid chain; its full sequence is tRNA-specific adenosine deaminase (156 aa).

Positions 2-120 (TNDIYFMTLA…GSLMNLLQQS (119 aa)) constitute a CMP/dCMP-type deaminase domain. H53 contributes to the Zn(2+) binding site. The Proton donor role is filled by E55. Residues C83 and C86 each contribute to the Zn(2+) site.

This sequence belongs to the cytidine and deoxycytidylate deaminase family. In terms of assembly, homodimer. Zn(2+) serves as cofactor.

The enzyme catalyses adenosine(34) in tRNA + H2O + H(+) = inosine(34) in tRNA + NH4(+). Functionally, catalyzes the deamination of adenosine to inosine at the wobble position 34 of tRNA(Arg2). The protein is tRNA-specific adenosine deaminase of Staphylococcus aureus (strain Mu50 / ATCC 700699).